Reading from the N-terminus, the 339-residue chain is DNA-directed RNA polymerase subunit alpha (339 aa).

The interval 1-233 (MVREEVAGST…DLFLPFLHAE (233 aa)) is alpha N-terminal domain (alpha-NTD). An alpha C-terminal domain (alpha-CTD) region spans residues 266–339 (GIPLNCIFID…IDLLKNKLSF (74 aa)).

It belongs to the RNA polymerase alpha chain family. As to quaternary structure, in plastids the minimal PEP RNA polymerase catalytic core is composed of four subunits: alpha, beta, beta', and beta''. When a (nuclear-encoded) sigma factor is associated with the core the holoenzyme is formed, which can initiate transcription.

Its subcellular location is the plastid. It is found in the chloroplast. The enzyme catalyses RNA(n) + a ribonucleoside 5'-triphosphate = RNA(n+1) + diphosphate. Its function is as follows. DNA-dependent RNA polymerase catalyzes the transcription of DNA into RNA using the four ribonucleoside triphosphates as substrates. This Elymus canadensis (Canada wild rye) protein is DNA-directed RNA polymerase subunit alpha.